Consider the following 182-residue polypeptide: CASP-like protein 5A1 (182 aa).

Over 1-47 the chain is Cytoplasmic; sequence MEMASHPAVHPVALPPPYQAVGPPAPPAVRINDFPGSPGTLMGLALR. The helical transmembrane segment at 48–68 threads the bilayer; it reads FAQLGFALTALCIMVSIVGFS. Residues 69-72 are Extracellular-facing; it reads SVTA. Residues 73 to 93 form a helical membrane-spanning segment; it reads FCFLVAAMVLQCIWSLCLGVL. Residues 94–117 lie on the Cytoplasmic side of the membrane; sequence DCYALLTKRSLRNSLILSFFVVGD. A helical transmembrane segment spans residues 118 to 138; that stretch reads WITSTMTFAGACAAAGITVLI. The Extracellular segment spans residues 139–158; the sequence is DNDLNQCGPNHCNRFEAAAA. Residues 159-179 traverse the membrane as a helical segment; that stretch reads MAFMSWVITTISFFLSFWILV. At 180-182 the chain is on the cytoplasmic side; it reads TCR.

It belongs to the Casparian strip membrane proteins (CASP) family. As to quaternary structure, homodimer and heterodimers.

It localises to the cell membrane. This Physcomitrium patens (Spreading-leaved earth moss) protein is CASP-like protein 5A1.